The primary structure comprises 123 residues: NADH-quinone oxidoreductase subunit A (123 aa).

3 helical membrane-spanning segments follow: residues 6-26 (LTPY…AMLI), 66-86 (VVAL…PWAV), and 93-113 (WFGY…LIYI).

Belongs to the complex I subunit 3 family. In terms of assembly, NDH-1 is composed of 14 different subunits. Subunits NuoA, H, J, K, L, M, N constitute the membrane sector of the complex.

It localises to the cell inner membrane. It carries out the reaction a quinone + NADH + 5 H(+)(in) = a quinol + NAD(+) + 4 H(+)(out). Functionally, NDH-1 shuttles electrons from NADH, via FMN and iron-sulfur (Fe-S) centers, to quinones in the respiratory chain. The immediate electron acceptor for the enzyme in this species is believed to be ubiquinone. Couples the redox reaction to proton translocation (for every two electrons transferred, four hydrogen ions are translocated across the cytoplasmic membrane), and thus conserves the redox energy in a proton gradient. This chain is NADH-quinone oxidoreductase subunit A, found in Myxococcus xanthus (strain DK1622).